The following is a 734-amino-acid chain: Translation initiation factor IF-2 (734 aa).

The interval 39 to 110 (SKFAPRSSFT…TGKPETKKRE (72 aa)) is disordered. Over residues 82 to 110 (DYEKRKLAEQRATRRLKGDTGKPETKKRE) the composition is skewed to basic and acidic residues. Residues 238 to 405 (NRPPIVTVMG…SIVLQAEILD (168 aa)) enclose the tr-type G domain. Residues 247-254 (GHVDHGKT) form a G1 region. 247-254 (GHVDHGKT) is a GTP binding site. The tract at residues 272–276 (GITQH) is G2. Residues 293–296 (DTPG) form a G3 region. GTP is bound by residues 293-297 (DTPGH) and 347-350 (NKCD). The interval 347-350 (NKCD) is G4. Residues 383 to 385 (SAK) are G5.

The protein belongs to the TRAFAC class translation factor GTPase superfamily. Classic translation factor GTPase family. IF-2 subfamily.

Its subcellular location is the cytoplasm. One of the essential components for the initiation of protein synthesis. Protects formylmethionyl-tRNA from spontaneous hydrolysis and promotes its binding to the 30S ribosomal subunits. Also involved in the hydrolysis of GTP during the formation of the 70S ribosomal complex. This Pelagibacter ubique (strain HTCC1062) protein is Translation initiation factor IF-2.